A 334-amino-acid polypeptide reads, in one-letter code: Porphobilinogen deaminase (334 aa).

Cys250 is modified (S-(dipyrrolylmethanemethyl)cysteine).

This sequence belongs to the HMBS family. Monomer. The cofactor is dipyrromethane.

It catalyses the reaction 4 porphobilinogen + H2O = hydroxymethylbilane + 4 NH4(+). The protein operates within porphyrin-containing compound metabolism; protoporphyrin-IX biosynthesis; coproporphyrinogen-III from 5-aminolevulinate: step 2/4. Functionally, tetrapolymerization of the monopyrrole PBG into the hydroxymethylbilane pre-uroporphyrinogen in several discrete steps. The protein is Porphobilinogen deaminase of Cutibacterium acnes (strain DSM 16379 / KPA171202) (Propionibacterium acnes).